Here is a 435-residue protein sequence, read N- to C-terminus: Probable exopolygalacturonase X (435 aa).

The signal sequence occupies residues 1-22 (MRLTHVLSHTLGLLALGATAEA). The segment at 31–55 (CSPKKPFRPLPTSSSRDKTCHVRSH) is disordered. Over residues 45–55 (SRDKTCHVRSH) the composition is skewed to basic and acidic residues. 4 N-linked (GlcNAc...) asparagine glycosylation sites follow: N93, N112, N128, and N198. 2 PbH1 repeats span residues 199-229 (SSNV…DTYR) and 230-251 (SNNI…SFKP). Residue D244 is the Proton donor of the active site. A disulfide bridge links C246 with C263. Residues N252 and N264 are each glycosylated (N-linked (GlcNAc...) asparagine). One copy of the PbH1 3 repeat lies at 253-273 (STNILVQNLHCNGSHGISVGS). H267 is an active-site residue. 4 N-linked (GlcNAc...) asparagine glycosylation sites follow: N291, N296, N328, and N353. One copy of the PbH1 4 repeat lies at 326–347 (VKNITYDTALIDNVDWAIEITQ). The PbH1 5 repeat unit spans residues 361–409 (PSSLTISDVHIKNFRGTTSGSEDPYVGTIVCSSPDTCSDIYTSNINVTS). A disulfide bond links C391 and C397. N406 and N429 each carry an N-linked (GlcNAc...) asparagine glycan.

Belongs to the glycosyl hydrolase 28 family.

The protein resides in the secreted. The catalysed reaction is [(1-&gt;4)-alpha-D-galacturonosyl](n) + H2O = alpha-D-galacturonate + [(1-&gt;4)-alpha-D-galacturonosyl](n-1). Functionally, specific in hydrolyzing the terminal glycosidic bond of polygalacturonic acid and oligogalacturonates. The sequence is that of Probable exopolygalacturonase X (pgaX) from Aspergillus niger (strain ATCC MYA-4892 / CBS 513.88 / FGSC A1513).